We begin with the raw amino-acid sequence, 458 residues long: tRNA modification GTPase MnmE (458 aa).

(6S)-5-formyl-5,6,7,8-tetrahydrofolate-binding residues include Arg26, Glu88, and Arg127. Residues 224-378 (GLSTAIIGRP…IEERINDIFF (155 aa)) form the TrmE-type G domain. Asn234 serves as a coordination point for K(+). GTP contacts are provided by residues 234–239 (NVGKSS), 253–259 (TDIEGTT), and 278–281 (DTAG). Ser238 provides a ligand contact to Mg(2+). Positions 253, 255, and 258 each coordinate K(+). Thr259 contacts Mg(2+). A (6S)-5-formyl-5,6,7,8-tetrahydrofolate-binding site is contributed by Lys458.

The protein belongs to the TRAFAC class TrmE-Era-EngA-EngB-Septin-like GTPase superfamily. TrmE GTPase family. As to quaternary structure, homodimer. Heterotetramer of two MnmE and two MnmG subunits. It depends on K(+) as a cofactor.

It localises to the cytoplasm. Its function is as follows. Exhibits a very high intrinsic GTPase hydrolysis rate. Involved in the addition of a carboxymethylaminomethyl (cmnm) group at the wobble position (U34) of certain tRNAs, forming tRNA-cmnm(5)s(2)U34. This chain is tRNA modification GTPase MnmE, found in Streptococcus agalactiae serotype III (strain NEM316).